A 658-amino-acid chain; its full sequence is Glycogen debranching enzyme (658 aa).

The active-site Nucleophile is the Asp335. Glu370 (proton donor) is an active-site residue. Positions 457–468 (NDANGEGNRDGT) are enriched in basic and acidic residues. The interval 457–481 (NDANGEGNRDGTDSNFSNNHGTEGL) is disordered.

It belongs to the glycosyl hydrolase 13 family.

The enzyme catalyses Hydrolysis of (1-&gt;6)-alpha-D-glucosidic linkages to branches with degrees of polymerization of three or four glucose residues in limit dextrin.. It functions in the pathway glycan degradation; glycogen degradation. Removes maltotriose and maltotetraose chains that are attached by 1,6-alpha-linkage to the limit dextrin main chain, generating a debranched limit dextrin. This is Glycogen debranching enzyme from Pectobacterium atrosepticum (strain SCRI 1043 / ATCC BAA-672) (Erwinia carotovora subsp. atroseptica).